Consider the following 131-residue polypeptide: Large ribosomal subunit protein bL12c (131 aa).

This sequence belongs to the bacterial ribosomal protein bL12 family. Homodimer. Part of the ribosomal stalk of the 50S ribosomal subunit. Forms a multimeric L10(L12)X complex, where L10 forms an elongated spine to which 2 to 4 L12 dimers bind in a sequential fashion. Binds GTP-bound translation factors.

The protein resides in the plastid. It is found in the chloroplast. Functionally, forms part of the ribosomal stalk which helps the ribosome interact with GTP-bound translation factors. Is thus essential for accurate translation. The protein is Large ribosomal subunit protein bL12c of Euglena gracilis.